The sequence spans 341 residues: Endolysin (341 aa).

Residues 23 to 153 (NFVIAHETAN…LGGTTHQDPY (131 aa)) enclose the N-acetylmuramoyl-L-alanine amidase domain. Disordered regions lie at residues 175-201 (GGGN…TNLD) and 248-267 (KGGA…STAK).

Belongs to the N-acetylmuramoyl-L-alanine amidase 2 family.

It is found in the secreted. The enzyme catalyses Hydrolyzes the link between N-acetylmuramoyl residues and L-amino acid residues in certain cell-wall glycopeptides.. This Listeria phage A511 (Bacteriophage A511) protein is Endolysin (PLY511).